A 64-amino-acid chain; its full sequence is Conotoxin mr5.3 (64 aa).

The signal sequence occupies residues 1-19 (MRCVPVFVILLLLIASVPS). Residues 20–48 (VDAQLKTKDDMPLASSHANVKRTLQILRN) constitute a propeptide that is removed on maturation. 4-carboxyglutamate occurs at positions 56 and 60.

Post-translationally, contains 2 disulfide bonds that can be either 'C1-C3, C2-C4' or 'C1-C4, C2-C3', since these disulfide connectivities have been observed for conotoxins with cysteine framework V (for examples, see AC P0DQQ7 and AC P81755). As to expression, expressed by the venom duct.

Its subcellular location is the secreted. This chain is Conotoxin mr5.3, found in Conus marmoreus (Marble cone).